Reading from the N-terminus, the 492-residue chain is Endoglucanase 15 (492 aa).

A signal peptide spans 1–30 (MSCISSQCFITIKSICIVLLLSITCGAVSA). D86 functions as the Nucleophile in the catalytic mechanism. Residues H414, D466, and E475 contribute to the active site.

Belongs to the glycosyl hydrolase 9 (cellulase E) family.

It localises to the secreted. It catalyses the reaction Endohydrolysis of (1-&gt;4)-beta-D-glucosidic linkages in cellulose, lichenin and cereal beta-D-glucans.. This is Endoglucanase 15 from Arabidopsis thaliana (Mouse-ear cress).